Reading from the N-terminus, the 270-residue chain is Putative phosphoenolpyruvate synthase regulatory protein (270 aa).

150-157 contributes to the ADP binding site; it reads GVSRCGKT.

It belongs to the pyruvate, phosphate/water dikinase regulatory protein family. PSRP subfamily.

The enzyme catalyses [pyruvate, water dikinase] + ADP = [pyruvate, water dikinase]-phosphate + AMP + H(+). It catalyses the reaction [pyruvate, water dikinase]-phosphate + phosphate + H(+) = [pyruvate, water dikinase] + diphosphate. In terms of biological role, bifunctional serine/threonine kinase and phosphorylase involved in the regulation of the phosphoenolpyruvate synthase (PEPS) by catalyzing its phosphorylation/dephosphorylation. In Shewanella amazonensis (strain ATCC BAA-1098 / SB2B), this protein is Putative phosphoenolpyruvate synthase regulatory protein.